A 436-amino-acid chain; its full sequence is Protein PhoH2 (436 aa).

Positions 12–137 (RTYVLDTSVL…LVSKDLPMRL (126 aa)) constitute a PINc domain.

In the N-terminal section; belongs to the PINc/VapC protein family. It in the C-terminal section; belongs to the PhoH family.

It carries out the reaction n ATP + n H2O + wound RNA = n ADP + n phosphate + unwound RNA.. The catalysed reaction is ATP + H2O = ADP + phosphate + H(+). It catalyses the reaction GTP + H2O = GDP + phosphate + H(+). In terms of biological role, unwinds and/or cleaves 5'-tailed RNA in vitro, the reaction is maximal with hydrolyzable ATP; double-stranded (ds)RNA and dsDNA are not unwound. Unlike the protein in mycobacteria there does not seem to be an antitoxin gene upstream, suggesting this is not a toxin-antitoxin system. Has ATPase and GTPase activities. The protein is Protein PhoH2 of Thermobispora bispora (strain ATCC 19993 / DSM 43833 / CBS 139.67 / JCM 10125 / KCTC 9307 / NBRC 14880 / R51).